Here is a 78-residue protein sequence, read N- to C-terminus: Small ribosomal subunit protein bS18 (78 aa).

It belongs to the bacterial ribosomal protein bS18 family. Part of the 30S ribosomal subunit. Forms a tight heterodimer with protein bS6.

In terms of biological role, binds as a heterodimer with protein bS6 to the central domain of the 16S rRNA, where it helps stabilize the platform of the 30S subunit. The chain is Small ribosomal subunit protein bS18 from Nocardioides sp. (strain ATCC BAA-499 / JS614).